The primary structure comprises 196 residues: ATP-dependent Clp protease proteolytic subunit (196 aa).

Catalysis depends on Ser-97, which acts as the Nucleophile. His-122 is a catalytic residue.

It belongs to the peptidase S14 family. Fourteen ClpP subunits assemble into 2 heptameric rings which stack back to back to give a disk-like structure with a central cavity, resembling the structure of eukaryotic proteasomes.

It localises to the cytoplasm. It carries out the reaction Hydrolysis of proteins to small peptides in the presence of ATP and magnesium. alpha-casein is the usual test substrate. In the absence of ATP, only oligopeptides shorter than five residues are hydrolyzed (such as succinyl-Leu-Tyr-|-NHMec, and Leu-Tyr-Leu-|-Tyr-Trp, in which cleavage of the -Tyr-|-Leu- and -Tyr-|-Trp bonds also occurs).. Functionally, cleaves peptides in various proteins in a process that requires ATP hydrolysis. Has a chymotrypsin-like activity. Plays a major role in the degradation of misfolded proteins. This chain is ATP-dependent Clp protease proteolytic subunit, found in Lacticaseibacillus paracasei (strain ATCC 334 / BCRC 17002 / CCUG 31169 / CIP 107868 / KCTC 3260 / NRRL B-441) (Lactobacillus paracasei).